The primary structure comprises 563 residues: Germacrene-A synthase (563 aa).

The Mg(2+) site is built by Asp-316, Asp-320, Asp-461, and Glu-469. The DDXXD motif motif lies at 316–320 (DDIYD).

Belongs to the terpene synthase family. Tpsa subfamily. It depends on Mg(2+) as a cofactor. As to expression, expressed in young leaves. Detected in trichomes and cones.

The enzyme catalyses (2E,6E)-farnesyl diphosphate = (+)-(R)-germacrene A + diphosphate. Its pathway is secondary metabolite biosynthesis; terpenoid biosynthesis. In terms of biological role, sesquiterpene synthase that catalyzes the formation of germacrene A. Can use farnesyl diphosphate as substrate, but not geranyl diphosphate or geranylgeranyl diphosphate. Beta-elemene, the initially measured product in the assay, is derived nonenzymatically from germacrene A. The polypeptide is Germacrene-A synthase (Humulus lupulus (European hop)).